Reading from the N-terminus, the 873-residue chain is Alanine--tRNA ligase (873 aa).

Residues His-559, His-563, Cys-661, and His-665 each contribute to the Zn(2+) site.

This sequence belongs to the class-II aminoacyl-tRNA synthetase family. In terms of assembly, homotetramer. Zn(2+) serves as cofactor.

It localises to the cytoplasm. The catalysed reaction is tRNA(Ala) + L-alanine + ATP = L-alanyl-tRNA(Ala) + AMP + diphosphate. Functionally, catalyzes the attachment of alanine to tRNA(Ala) in a two-step reaction: alanine is first activated by ATP to form Ala-AMP and then transferred to the acceptor end of tRNA(Ala). Also edits incorrectly charged Ser-tRNA(Ala) and Gly-tRNA(Ala) via its editing domain. This is Alanine--tRNA ligase from Wigglesworthia glossinidia brevipalpis.